The primary structure comprises 205 residues: Small ribosomal subunit protein uS4 (205 aa).

Positions 94–157 (SRLDTVVYRM…QQIPLIQESI (64 aa)) constitute an S4 RNA-binding domain.

Belongs to the universal ribosomal protein uS4 family. As to quaternary structure, part of the 30S ribosomal subunit. Contacts protein S5. The interaction surface between S4 and S5 is involved in control of translational fidelity.

One of the primary rRNA binding proteins, it binds directly to 16S rRNA where it nucleates assembly of the body of the 30S subunit. Its function is as follows. With S5 and S12 plays an important role in translational accuracy. This is Small ribosomal subunit protein uS4 from Rickettsia prowazekii (strain Madrid E).